The chain runs to 382 residues: Glucose-1-phosphate adenylyltransferase (382 aa).

Residues tyrosine 100, glycine 165, 180–181 (EK), and serine 191 contribute to the alpha-D-glucose 1-phosphate site.

The protein belongs to the bacterial/plant glucose-1-phosphate adenylyltransferase family. In terms of assembly, homotetramer.

The catalysed reaction is alpha-D-glucose 1-phosphate + ATP + H(+) = ADP-alpha-D-glucose + diphosphate. It functions in the pathway glycan biosynthesis; glycogen biosynthesis. In terms of biological role, involved in the biosynthesis of ADP-glucose, a building block required for the elongation reactions to produce glycogen. Catalyzes the reaction between ATP and alpha-D-glucose 1-phosphate (G1P) to produce pyrophosphate and ADP-Glc. This Clostridium novyi (strain NT) protein is Glucose-1-phosphate adenylyltransferase.